A 560-amino-acid polypeptide reads, in one-letter code: Potassium-transporting ATPase potassium-binding subunit (560 aa).

Transmembrane regions (helical) follow at residues Phe6–Leu26, Leu63–Cys83, Gly132–Ile152, Leu175–Ile195, Leu250–Phe270, Ala282–Glu302, Phe327–Val347, Ala356–Val376, Gly379–Gly399, Met416–Met436, Leu483–Ile503, and Gly524–Ile544.

Belongs to the KdpA family. The system is composed of three essential subunits: KdpA, KdpB and KdpC.

It localises to the cell inner membrane. In terms of biological role, part of the high-affinity ATP-driven potassium transport (or Kdp) system, which catalyzes the hydrolysis of ATP coupled with the electrogenic transport of potassium into the cytoplasm. This subunit binds the periplasmic potassium ions and delivers the ions to the membrane domain of KdpB through an intramembrane tunnel. The protein is Potassium-transporting ATPase potassium-binding subunit of Cronobacter sakazakii (strain ATCC BAA-894) (Enterobacter sakazakii).